Consider the following 155-residue polypeptide: Ribosomal RNA large subunit methyltransferase H (155 aa).

Residues Leu72, Gly103, and 122-127 (LSALTL) each bind S-adenosyl-L-methionine.

This sequence belongs to the RNA methyltransferase RlmH family. Homodimer.

It localises to the cytoplasm. The enzyme catalyses pseudouridine(1915) in 23S rRNA + S-adenosyl-L-methionine = N(3)-methylpseudouridine(1915) in 23S rRNA + S-adenosyl-L-homocysteine + H(+). Its function is as follows. Specifically methylates the pseudouridine at position 1915 (m3Psi1915) in 23S rRNA. This Citrobacter koseri (strain ATCC BAA-895 / CDC 4225-83 / SGSC4696) protein is Ribosomal RNA large subunit methyltransferase H.